A 156-amino-acid chain; its full sequence is Small ribosomal subunit protein uS7 (156 aa).

This sequence belongs to the universal ribosomal protein uS7 family. Part of the 30S ribosomal subunit. Contacts proteins S9 and S11.

Its function is as follows. One of the primary rRNA binding proteins, it binds directly to 16S rRNA where it nucleates assembly of the head domain of the 30S subunit. Is located at the subunit interface close to the decoding center, probably blocks exit of the E-site tRNA. This Gemmatimonas aurantiaca (strain DSM 14586 / JCM 11422 / NBRC 100505 / T-27) protein is Small ribosomal subunit protein uS7.